Here is a 279-residue protein sequence, read N- to C-terminus: Zinc-finger homeodomain protein 1 (279 aa).

The segment covering 1 to 30 has biased composition (acidic residues); that stretch reads MEFEDNNNNNDEEQEEDMNLHEEEEDDDAV. Positions 1-62 are disordered; sequence MEFEDNNNNN…TTSTGGGGGF (62 aa). The ZF-HD dimerization-type zinc finger occupies 75-124; the sequence is FRECLKNQAVNIGGHAVDGCGEFMPAGIEGTIDALKCAACGCHRNFHRKE. 2 disordered regions span residues 128–199 and 245–279; these read FHHA…TKFT and NNKHTLGKSPSPLHHHQAPPPPPPQSSFHHEQDQP. Residues 134-143 are compositionally biased toward pro residues; that stretch reads QHQPPPPPPG. The homeobox; atypical DNA-binding region spans 191–254; sequence RKRHRTKFTA…NNKHTLGKSP (64 aa).

Homo- and heterodimer with other ZFHD proteins. Interacts with MIF1 and MIF2; these interactions prevent nuclear localization and DNA-binding to inhibit transcription regulation activity. Binds to ZHD2, ZHD3, ZHD4, ZHD5, ZHD6, ZHD7, ZHD8, ZHD9, ZHD10 and ZHD11. As to expression, mostly expressed in flowers and inflorescence.

It localises to the nucleus. Functionally, putative transcription factor. This Arabidopsis thaliana (Mouse-ear cress) protein is Zinc-finger homeodomain protein 1 (ZHD1).